A 51-amino-acid polypeptide reads, in one-letter code: Large ribosomal subunit protein bL33 (51 aa).

The protein belongs to the bacterial ribosomal protein bL33 family.

This chain is Large ribosomal subunit protein bL33, found in Marinobacter nauticus (strain ATCC 700491 / DSM 11845 / VT8) (Marinobacter aquaeolei).